The following is a 444-amino-acid chain: Probable glycine dehydrogenase (decarboxylating) subunit 1 (444 aa).

It belongs to the GcvP family. N-terminal subunit subfamily. In terms of assembly, the glycine cleavage system is composed of four proteins: P, T, L and H. In this organism, the P 'protein' is a heterodimer of two subunits.

The catalysed reaction is N(6)-[(R)-lipoyl]-L-lysyl-[glycine-cleavage complex H protein] + glycine + H(+) = N(6)-[(R)-S(8)-aminomethyldihydrolipoyl]-L-lysyl-[glycine-cleavage complex H protein] + CO2. Functionally, the glycine cleavage system catalyzes the degradation of glycine. The P protein binds the alpha-amino group of glycine through its pyridoxal phosphate cofactor; CO(2) is released and the remaining methylamine moiety is then transferred to the lipoamide cofactor of the H protein. The protein is Probable glycine dehydrogenase (decarboxylating) subunit 1 of Chlorobaculum tepidum (strain ATCC 49652 / DSM 12025 / NBRC 103806 / TLS) (Chlorobium tepidum).